An 853-amino-acid polypeptide reads, in one-letter code: Bromodomain-containing protein bet-1 (853 aa).

Residues 1-19 are compositionally biased toward polar residues; that stretch reads MSEGSGDQSQQRPWASPRQ. Disordered stretches follow at residues 1 to 22 and 141 to 245; these read MSEG…QQPI and SLEQ…LRAK. Positions 39–145 constitute a Bromo 1 domain; the sequence is RHTNKLDYIM…EVIKKSLEQA (107 aa). Positions 141–153 are enriched in basic and acidic residues; the sequence is SLEQAPREEHDMD. 2 stretches are compositionally biased toward low complexity: residues 166 to 175 and 192 to 215; these read SDGGSKSSSS and SEVS…SVAA. Residue Lys252 forms a Glycyl lysine isopeptide (Lys-Gly) (interchain with G-Cter in SUMO) linkage. Positions 257 to 366 constitute a Bromo 2 domain; sequence QPLLPSMKPC…EVFDRRWAEL (110 aa). Residues 369–381 are compositionally biased toward low complexity; that stretch reads SSSRASSVAPQSA. Positions 369 to 418 are disordered; that stretch reads SSSRASSVAPQSAPIAPTPKVAKSSAPKEPKESRKEHKKETTFEASGAKS. A compositionally biased stretch (basic and acidic residues) spans 394–410; the sequence is APKEPKESRKEHKKETT. Positions 419 to 458 form a coiled coil; that stretch reads EDLMQINNALSMIREREEKLKAELAAAQAIKDKLTSVKNR. The 86-residue stretch at 516 to 601 folds into the NET domain; the sequence is DSDDEDNKMA…TIPTLNGNGD (86 aa). Disordered stretches follow at residues 594 to 814 and 819 to 838; these read PTLN…DEQT and MRME…VSLS. Low complexity predominate over residues 612 to 624; sequence TSSGATGSKGSSS. Over residues 684-696 the composition is skewed to polar residues; the sequence is QPPSTSREWNQSS. The span at 708 to 736 shows a compositional bias: low complexity; the sequence is QPPMSRVPASSSTSVSAIGKNNAAASSNS. The span at 786-807 shows a compositional bias: polar residues; that stretch reads QFFQSQPTTSATIRSPTESQPG. Over residues 819 to 832 the composition is skewed to basic and acidic residues; the sequence is MRMEAKRARQKEDE.

It belongs to the BET family. Interacts with acetylated histone H4. Interacts (via BROMO domain 2) with smo-1 and ubc-9. Expressed in T-cells, Q-cells, V5-cells and their descendants such as somatic gonad and syncytium.

It is found in the nucleus. The protein localises to the chromosome. Its function is as follows. Required for the establishment and maintenance of stable cell fate in several lineages including V5.pa, T, Z1/Z4 and QR lineages probably by repressing the expression of cell fate determinants. Required to maintain non-distal tip cell (DTC) fate of somatic gonadal cells through the htz-1-mediated repression of transcription factor ceh-22. Regulates the subnuclear localization of histone variant htz-1 in somatic gonadal cells. Plays a role in the attenuation of the let-60/ras pathway, probably by preventing expression of activators of the pathway. Involved in adult locomotion. Acts together with the sumoylation pathway to prevent muscle myosin depletion in aging adults probably by preventing myoblast growth factor receptor egl-15 overexpression. May play a role in vulva development. The protein is Bromodomain-containing protein bet-1 of Caenorhabditis elegans.